The following is a 467-amino-acid chain: UDP-N-acetylmuramoylalanine--D-glutamate ligase (467 aa).

Residue 121–127 coordinates ATP; sequence GTNGKST.

This sequence belongs to the MurCDEF family.

It is found in the cytoplasm. It carries out the reaction UDP-N-acetyl-alpha-D-muramoyl-L-alanine + D-glutamate + ATP = UDP-N-acetyl-alpha-D-muramoyl-L-alanyl-D-glutamate + ADP + phosphate + H(+). Its pathway is cell wall biogenesis; peptidoglycan biosynthesis. Functionally, cell wall formation. Catalyzes the addition of glutamate to the nucleotide precursor UDP-N-acetylmuramoyl-L-alanine (UMA). This is UDP-N-acetylmuramoylalanine--D-glutamate ligase from Brucella abortus (strain 2308).